Here is a 351-residue protein sequence, read N- to C-terminus: UDP-N-acetylglucosamine--N-acetylmuramyl-(pentapeptide) pyrophosphoryl-undecaprenol N-acetylglucosamine transferase (351 aa).

UDP-N-acetyl-alpha-D-glucosamine-binding positions include 11-13 (TGG), asparagine 120, arginine 161, serine 187, and glutamine 281.

The protein belongs to the glycosyltransferase 28 family. MurG subfamily.

It is found in the cell inner membrane. The catalysed reaction is di-trans,octa-cis-undecaprenyl diphospho-N-acetyl-alpha-D-muramoyl-L-alanyl-D-glutamyl-meso-2,6-diaminopimeloyl-D-alanyl-D-alanine + UDP-N-acetyl-alpha-D-glucosamine = di-trans,octa-cis-undecaprenyl diphospho-[N-acetyl-alpha-D-glucosaminyl-(1-&gt;4)]-N-acetyl-alpha-D-muramoyl-L-alanyl-D-glutamyl-meso-2,6-diaminopimeloyl-D-alanyl-D-alanine + UDP + H(+). It participates in cell wall biogenesis; peptidoglycan biosynthesis. Its function is as follows. Cell wall formation. Catalyzes the transfer of a GlcNAc subunit on undecaprenyl-pyrophosphoryl-MurNAc-pentapeptide (lipid intermediate I) to form undecaprenyl-pyrophosphoryl-MurNAc-(pentapeptide)GlcNAc (lipid intermediate II). The sequence is that of UDP-N-acetylglucosamine--N-acetylmuramyl-(pentapeptide) pyrophosphoryl-undecaprenol N-acetylglucosamine transferase from Rippkaea orientalis (strain PCC 8801 / RF-1) (Cyanothece sp. (strain PCC 8801)).